A 485-amino-acid chain; its full sequence is Ribulose bisphosphate carboxylase large chain (485 aa).

Substrate-binding residues include N124 and T174. The Proton acceptor role is filled by K176. K178 is a binding site for substrate. Positions 202, 204, and 205 each coordinate Mg(2+). K202 bears the N6-carboxylysine mark. H294 functions as the Proton acceptor in the catalytic mechanism. Substrate is bound by residues R295, H327, and S379.

Belongs to the RuBisCO large chain family. Type I subfamily. Heterohexadecamer of 8 large chains and 8 small chains. Mg(2+) is required as a cofactor.

The enzyme catalyses 2 (2R)-3-phosphoglycerate + 2 H(+) = D-ribulose 1,5-bisphosphate + CO2 + H2O. It carries out the reaction D-ribulose 1,5-bisphosphate + O2 = 2-phosphoglycolate + (2R)-3-phosphoglycerate + 2 H(+). RuBisCO catalyzes two reactions: the carboxylation of D-ribulose 1,5-bisphosphate, the primary event in carbon dioxide fixation, as well as the oxidative fragmentation of the pentose substrate. Both reactions occur simultaneously and in competition at the same active site. The chain is Ribulose bisphosphate carboxylase large chain from Rhodopseudomonas palustris (strain TIE-1).